Reading from the N-terminus, the 650-residue chain is MASGEHSPGSGAARRPLHSAQAVDVASASNFRAFELLHLHLDLRAEFGPPGPGAGSRGLSGTAVLDLRCLEPEGAAELRLDSHPCLEVTAAALRRERPGSEEPPAEPVSFYTQPFSHYGQALCVSFPQPCRAAERLQVLLTYRVGEGPGVCWLAPEQTAGKKKPFVYTQGQAVLNRAFFPCFDTPAVKYKYSALIEVPDGFTAVMSASTWEKRGPNKFFFQMCQPIPSYLIALAIGDLVSAEVGPRSRVWAEPCLIDAAKEEYNGVIEEFLATGEKLFGPYVWGRYDLLFMPPSFPFGGMENPCLTFVTPCLLAGDRSLADVIIHEISHSWFGNLVTNANWGEFWLNEGFTMYAQRRISTILFGAAYTCLEAATGRALLRQHMDITGEENPLNKLRVKIEPGVDPDDTYNETPYEKGFCFVSYLAHLVGDQDQFDSFLKAYVHEFKFRSILADDFLDFYLEYFPELKKKRVDIIPGFEFDRWLNTPGWPPYLPDLSPGDSLMKPAEELAQLWAAEELDMKAIEAVAISPWKTYQLVYFLDKILQKSPLPPGNVKKLGDTYPSISNARNAELRLRWGQIVLKNDHQEDFWKVKEFLHNQGKQKYTLPLYHAMMGGSEVAQTLAKETFASTASQLHSNVVNYVQQIVAPKGS.

Ala2 carries the N-acetylalanine modification. At Ser7 the chain carries Phosphoserine. A substrate-binding site is contributed by 298–302 (GGMEN). Residue His325 participates in Zn(2+) binding. The Proton acceptor role is filled by Glu326. Residues His329 and Glu348 each contribute to the Zn(2+) site. N6-acetyllysine is present on Lys446.

This sequence belongs to the peptidase M1 family. The cofactor is Zn(2+).

The protein localises to the secreted. It carries out the reaction Release of N-terminal Arg and Lys from oligopeptides when P1' is not Pro. Also acts on arylamides of Arg and Lys.. Its function is as follows. Exopeptidase which selectively removes arginine and/or lysine residues from the N-terminus of several peptide substrates including Arg(0)-Leu-enkephalin, Arg(0)-Met-enkephalin and Arg(-1)-Lys(0)-somatostatin-14. Can hydrolyze leukotriene A4 (LTA-4) into leukotriene B4 (LTB-4). This is Aminopeptidase B (RNPEP) from Homo sapiens (Human).